The following is a 356-amino-acid chain: (+)-(1(10)E,4E,6S,7R)-germacradien-6-ol synthase (356 aa).

Asp86 and Asp91 together coordinate Mg(2+). Residues 86–91 carry the DDXXXD motif motif; sequence DDEYCD. A substrate-binding site is contributed by Arg181. Mg(2+) contacts are provided by Asn227 and Ser231. Position 234 (Lys234) interacts with substrate. Glu235 is a Mg(2+) binding site. Residue 314 to 315 coordinates substrate; that stretch reads RY.

The protein belongs to the terpene synthase family. Mg(2+) serves as cofactor.

The catalysed reaction is (2E,6E)-farnesyl diphosphate + H2O = (+)-(1(10)E,4E,6S,7R)-germacradien-6-ol + diphosphate. It functions in the pathway secondary metabolite biosynthesis; terpenoid biosynthesis. Functionally, catalyzes the conversion of (2E,6E)-farnesyl diphosphate (FPP) to yield the sesquiterpene (+)-(1(10)E,4E,6S,7R)-germacradien-6-ol via a putative 1,10-cyclization, which could require the abstraction of the pyrophosphate from FPP to yield the (E,E)-germacradienyl cation. The only accepted substrate is farnesyl diphosphate (FPP). This chain is (+)-(1(10)E,4E,6S,7R)-germacradien-6-ol synthase, found in Streptomyces pratensis (strain ATCC 33331 / IAF-45CD).